The sequence spans 255 residues: Probable transcriptional regulatory protein Rcas_0718 (255 aa).

This sequence belongs to the TACO1 family.

The protein localises to the cytoplasm. This is Probable transcriptional regulatory protein Rcas_0718 from Roseiflexus castenholzii (strain DSM 13941 / HLO8).